Here is a 191-residue protein sequence, read N- to C-terminus: Cell division protein SepF (191 aa).

Polar residues predominate over residues 156 to 167; it reads EEASPSNMSNKG. A disordered region spans residues 156 to 191; it reads EEASPSNMSNKGNDLISKETSPAPEPAWGETVATAL.

It belongs to the SepF family. As to quaternary structure, homodimer. Interacts with FtsZ.

Its subcellular location is the cytoplasm. Functionally, cell division protein that is part of the divisome complex and is recruited early to the Z-ring. Probably stimulates Z-ring formation, perhaps through the cross-linking of FtsZ protofilaments. Its function overlaps with FtsA. The sequence is that of Cell division protein SepF from Prochlorococcus marinus (strain NATL2A).